The primary structure comprises 620 residues: Transcription factor GTE11 (620 aa).

The tract at residues 1–35 is disordered; it reads MTVRNGGFPGDYNRNSFDSPGGCDDSPNASKDDET. Residues 124 to 230 form the Bromo domain; that stretch reads TSTMLRMKQC…KFFEVRWKTI (107 aa). An NET domain is found at 270 to 351; it reads NSLLEPAKRV…EFLRENQKKD (82 aa). Phosphoserine is present on S417. Residues 445-620 form a transcription activation domain region; the sequence is EKRYRAALLK…GNEVEEGEID (176 aa). Residues 470–544 are a coiled coil; that stretch reads NQNEKRDPET…MEKSVEINEN (75 aa). Disordered regions lie at residues 491 to 511 and 597 to 620; these read KKKE…ARRK and EDED…GEID.

In terms of assembly, interacts with BT1, BT2 and BT4.

The protein localises to the nucleus. The sequence is that of Transcription factor GTE11 (GTE11) from Arabidopsis thaliana (Mouse-ear cress).